A 168-amino-acid polypeptide reads, in one-letter code: Peptidyl-prolyl cis-trans isomerase-like 3 (168 aa).

Residues M1–V156 enclose the PPIase cyclophilin-type domain.

It belongs to the cyclophilin-type PPIase family. PPIL3 subfamily.

It catalyses the reaction [protein]-peptidylproline (omega=180) = [protein]-peptidylproline (omega=0). In terms of biological role, PPIases accelerate the folding of proteins. It catalyzes the cis-trans isomerization of proline imidic peptide bonds in oligopeptides. This Mycosarcoma maydis (Corn smut fungus) protein is Peptidyl-prolyl cis-trans isomerase-like 3 (CYP10).